Here is a 361-residue protein sequence, read N- to C-terminus: MKDSVIRKLEGLLERNEEVLALLSDAGIIADQERFRALSKEYSQLEDVVKAFKSFQQAEEDLESAKEMMEEDDAELKEMAQEEYKAAKETIETLESELQILLLPKDPNDDNNCFIEIRAGAGGDEAAIFAGDLFRMYSKYAESNRWQIEVMNTNEGEHGGFKEVIAKISGEGVYGKLKFESGGHRVQRVPETESQGRVHTSACTVIVLPEIPEAEAIEINKADLKVDTFRASGAGGQHVNKTDSAIRITHIPTGIVVECQDQRSQHKNRAQAMSVLSARIQAVEDEKRRSEEDSTRRNLVSSGDRSERIRTYNFPQGRVSEHRINLTLYRLGEFMEGDIDVVIEPLIQETQADMLAALGEG.

Glutamine 237 is modified (N5-methylglutamine). Residues 284–296 (EDEKRRSEEDSTR) are compositionally biased toward basic and acidic residues. The segment at 284 to 305 (EDEKRRSEEDSTRRNLVSSGDR) is disordered.

It belongs to the prokaryotic/mitochondrial release factor family. Methylated by PrmC. Methylation increases the termination efficiency of RF1.

It is found in the cytoplasm. Peptide chain release factor 1 directs the termination of translation in response to the peptide chain termination codons UAG and UAA. The polypeptide is Peptide chain release factor 1 (Shewanella piezotolerans (strain WP3 / JCM 13877)).